Reading from the N-terminus, the 307-residue chain is Mitochondrial brown fat uncoupling protein 1 (307 aa).

Topologically, residues 2-10 (VNPTTSEVH) are mitochondrial intermembrane. A helical membrane pass occupies residues 11-32 (PTMGVKIFSAGVAACLADIITF). Solcar repeat units lie at residues 11–102 (PTMG…VQEY), 111–201 (PTLG…MKGA), and 210–295 (DDVP…LKKE). Residues 33–73 (PLDTAKVRLQIQGEGQISSTIRYKGVLGTITTLAKTEGLPK) are Mitochondrial matrix-facing. Lys56 serves as a coordination point for fatty acid 16:0. Residues 74 to 96 (LYSGLPAGIQRQISFASLRIGLY) form a helical membrane-spanning segment. At 97-116 (DTVQEYFSSGKETPPTLGNR) the chain is on the mitochondrial intermembrane side. Residues 117–133 (ISAGLMTGGVAVFIGQP) traverse the membrane as a helical segment. Over 134-178 (TEVVKVRLQAQSHLHGIKPRYTGTYNAYRIIATTESFSTLWKGTT) the chain is Mitochondrial matrix. Residues 179–195 (PNLLRNVIINCVELVTY) traverse the membrane as a helical segment. Topologically, residues 196-212 (DLMKGALVNNQILADDV) are mitochondrial intermembrane. The helical transmembrane segment at 213–232 (PCHLLSAFVAGFCTTFLASP) threads the bilayer. The Mitochondrial matrix segment spans residues 233–266 (ADVVKTRFINSLPGQYPSVPSCAMTMLTKEGPTA). Cysteine sulfenic acid (-SOH) is present on Cys254. The helical transmembrane segment at 267-289 (FFKGFVPSFLRLASWNVIMFVCF) threads the bilayer. Lys269 is a fatty acid 16:0 binding site. Residues 290–307 (EQLKKELSKSRQTVDCTT) lie on the Mitochondrial intermembrane side of the membrane.

Belongs to the mitochondrial carrier (TC 2.A.29) family. In terms of assembly, most probably functions as a monomer. Binds one purine nucleotide per monomer. However, has also been suggested to function as a homodimer or a homotetramer. Tightly associates with cardiolipin in the mitochondrion inner membrane; may stabilize and regulate its activity. May undergo sulfenylation upon cold exposure. May increase the sensitivity of UCP1 thermogenic function to the activation by noradrenaline probably through structural effects. In terms of processing, may undergo ubiquitin-mediated proteasomal degradation. Brown adipose tissue.

It is found in the mitochondrion inner membrane. It carries out the reaction H(+)(in) = H(+)(out). Its activity is regulated as follows. Has no constitutive proton transporter activity and has to be activated by long-chain fatty acids/LCFAs. Inhibited by purine nucleotides. Both purine nucleotides and LCFAs bind the cytosolic side of the transporter and directly compete to activate or inhibit it. Activated by noradrenaline and reactive oxygen species. Despite lacking canonical translational encoding for selenocysteine, a small pool of the protein has been observed to selectively incorporate selenocysteine at 'Cys-254'. Selenocysteine-modified protein is highly sensitive to redox modification and may constitute a pool of protein highly sensitive to activation by elevated levels of reactive oxygen species (ROS). Mitochondrial protein responsible for thermogenic respiration, a specialized capacity of brown adipose tissue and beige fat that participates in non-shivering adaptive thermogenesis to temperature and diet variations and more generally to the regulation of energy balance. Functions as a long-chain fatty acid/LCFA and proton symporter, simultaneously transporting one LCFA and one proton through the inner mitochondrial membrane. However, LCFAs remaining associated with the transporter via their hydrophobic tails, it results in an apparent transport of protons activated by LCFAs. Thereby, dissipates the mitochondrial proton gradient and converts the energy of substrate oxydation into heat instead of ATP. Regulates the production of reactive oxygen species/ROS by mitochondria. This chain is Mitochondrial brown fat uncoupling protein 1, found in Mesocricetus auratus (Golden hamster).